A 962-amino-acid chain; its full sequence is AP2-associated protein kinase 1 (962 aa).

M1 is modified (N-acetylmethionine). A compositionally biased stretch (basic and acidic residues) spans 1 to 11 (MKKFFDSRREQ). Residues 1–27 (MKKFFDSRREQGSSGLGSGSSGGGGSS) form a disordered region. S14 carries the phosphoserine modification. Over residues 14–27 (SGLGSGSSGGGGSS) the composition is skewed to gly residues. A Protein kinase domain is found at 46–314 (VTVDEVLAEG…QVSYFSFKLL (269 aa)). Residues 52-60 (LAEGGFALV) and K74 contribute to the ATP site. The Proton acceptor role is filled by D176. Phosphotyrosine is present on Y234. Phosphoserine is present on S235. 2 disordered regions span residues 325-515 (NSPI…QFQA) and 576-633 (PQAQ…RAGH). Phosphothreonine is present on residues T353 and T388. R390 is subject to Omega-N-methylarginine. Over residues 397-418 (PLPQATGPSNQPSLLASVSQPK) the composition is skewed to polar residues. The span at 419–434 (AQATPSQPLQSSQPKQ) shows a compositional bias: low complexity. Residues 435-444 (PQAPPTPQQT) are compositionally biased toward pro residues. T440 carries the phosphothreonine modification. Composition is skewed to low complexity over residues 445–485 (PAPQ…QPQQ), 498–514 (QQQQ…QQFQ), and 576–606 (PQAQ…KVQT). Phosphothreonine is present on T607. Polar residues predominate over residues 614-628 (GQKVGSLTPPSSPKT). At S619 the chain carries Phosphoserine. The residue at position 621 (T621) is a Phosphothreonine. A phosphoserine mark is found at S624, S625, S638, and S651. T654 carries the phosphothreonine modification. Over residues 664–677 (ASLSKSKSATTTPS) the composition is skewed to low complexity. The interval 664-702 (ASLSKSKSATTTPSGSPRTSQQNVSNASEGSTWNPFDDD) is disordered. A compositionally biased stretch (polar residues) spans 678 to 697 (GSPRTSQQNVSNASEGSTWN). 4 positions are modified to phosphoserine: S732, S847, S938, and S939. The segment at 824 to 961 (EKADAAVESL…SLLLVDQLID (138 aa)) is clathrin-binding domain (CBD). Disordered stretches follow at residues 839–860 (PPVA…TDSL) and 925–946 (LITK…ESSL). Residues 846-860 (PSHTESVTSNRTDSL) show a composition bias toward polar residues. Residues 932–945 (GGHSRNSSGSSESS) are compositionally biased toward low complexity.

The protein belongs to the protein kinase superfamily. Ser/Thr protein kinase family. Interacts (via CBD domain) with clathrin. Interacts with AP-2 complex. Interacts with NUMB. Interacts with alpha-adaptin. Interacts with EPS15. Interacts with membrane-bound activated NOTCH1 but not with the inactive full-length form of NOTCH1. Preferentially interacts with monoubiquitinated activated NOTCH1 compared to the non-ubiquitinated form. Post-translationally, autophosphorylated.

The protein localises to the cell membrane. It is found in the membrane. It localises to the clathrin-coated pit. The protein resides in the presynapse. It catalyses the reaction L-seryl-[protein] + ATP = O-phospho-L-seryl-[protein] + ADP + H(+). It carries out the reaction L-threonyl-[protein] + ATP = O-phospho-L-threonyl-[protein] + ADP + H(+). Its activity is regulated as follows. Stimulated by clathrin. In terms of biological role, regulates clathrin-mediated endocytosis by phosphorylating the AP2M1/mu2 subunit of the adaptor protein complex 2 (AP-2) which ensures high affinity binding of AP-2 to cargo membrane proteins during the initial stages of endocytosis. Preferentially, may phosphorylate substrates on threonine residues. Regulates phosphorylation of other AP-2 subunits as well as AP-2 localization and AP-2-mediated internalization of ligand complexes. Phosphorylates NUMB and regulates its cellular localization, promoting NUMB localization to endosomes. Binds to and stabilizes the activated form of NOTCH1, increases its localization in endosomes and regulates its transcriptional activity. This chain is AP2-associated protein kinase 1 (Aak1), found in Rattus norvegicus (Rat).